Consider the following 78-residue polypeptide: MSDIASRVKAIIVDKLGVDENEVVTEASFTNDLGADSLDTVELIMEFEKEFDIQIPDDQAENIATVGQAISYIEEAKK.

The region spanning 2–77 (SDIASRVKAI…QAISYIEEAK (76 aa)) is the Carrier domain. Ser-37 carries the post-translational modification O-(pantetheine 4'-phosphoryl)serine.

The protein belongs to the acyl carrier protein (ACP) family. In terms of processing, 4'-phosphopantetheine is transferred from CoA to a specific serine of apo-ACP by AcpS. This modification is essential for activity because fatty acids are bound in thioester linkage to the sulfhydryl of the prosthetic group.

The protein localises to the cytoplasm. It functions in the pathway lipid metabolism; fatty acid biosynthesis. Its function is as follows. Carrier of the growing fatty acid chain in fatty acid biosynthesis. The chain is Acyl carrier protein from Flavobacterium johnsoniae (strain ATCC 17061 / DSM 2064 / JCM 8514 / BCRC 14874 / CCUG 350202 / NBRC 14942 / NCIMB 11054 / UW101) (Cytophaga johnsonae).